The chain runs to 207 residues: Guanylate kinase (207 aa).

One can recognise a Guanylate kinase-like domain in the interval 3-181; it reads GQLFVICGPS…AVEMVVSIVR (179 aa). 10 to 17 provides a ligand contact to ATP; the sequence is GPSGAGKT.

Belongs to the guanylate kinase family.

The protein resides in the cytoplasm. It carries out the reaction GMP + ATP = GDP + ADP. In terms of biological role, essential for recycling GMP and indirectly, cGMP. This Thermotoga maritima (strain ATCC 43589 / DSM 3109 / JCM 10099 / NBRC 100826 / MSB8) protein is Guanylate kinase (gmk).